The sequence spans 444 residues: Glutamyl-tRNA reductase (444 aa).

Substrate is bound by residues 49–52 (TCNR), Ser109, 114–116 (ETQ), and Gln120. The active-site Nucleophile is the Cys50. 189 to 194 (GAGKMG) is an NADP(+) binding site.

Belongs to the glutamyl-tRNA reductase family. As to quaternary structure, homodimer.

It carries out the reaction (S)-4-amino-5-oxopentanoate + tRNA(Glu) + NADP(+) = L-glutamyl-tRNA(Glu) + NADPH + H(+). The protein operates within porphyrin-containing compound metabolism; protoporphyrin-IX biosynthesis; 5-aminolevulinate from L-glutamyl-tRNA(Glu): step 1/2. In terms of biological role, catalyzes the NADPH-dependent reduction of glutamyl-tRNA(Glu) to glutamate 1-semialdehyde (GSA). In Bacillus cereus (strain G9842), this protein is Glutamyl-tRNA reductase.